A 160-amino-acid chain; its full sequence is Large ribosomal subunit protein uL10 (160 aa).

The protein belongs to the universal ribosomal protein uL10 family. In terms of assembly, part of the ribosomal stalk of the 50S ribosomal subunit. The N-terminus interacts with L11 and the large rRNA to form the base of the stalk. The C-terminus forms an elongated spine to which L12 dimers bind in a sequential fashion forming a multimeric L10(L12)X complex.

In terms of biological role, forms part of the ribosomal stalk, playing a central role in the interaction of the ribosome with GTP-bound translation factors. The polypeptide is Large ribosomal subunit protein uL10 (Ehrlichia canis (strain Jake)).